The chain runs to 387 residues: Cysteine desulfurase (387 aa).

Pyridoxal 5'-phosphate-binding positions include 72-73 (GT), N152, Q180, and 200-202 (SAH). At K203 the chain carries N6-(pyridoxal phosphate)lysine. Residue T238 participates in pyridoxal 5'-phosphate binding. C326 functions as the Cysteine persulfide intermediate in the catalytic mechanism. Position 326 (C326) interacts with [2Fe-2S] cluster.

Belongs to the class-V pyridoxal-phosphate-dependent aminotransferase family. NifS/IscS subfamily. In terms of assembly, homodimer. Pyridoxal 5'-phosphate is required as a cofactor.

It catalyses the reaction (sulfur carrier)-H + L-cysteine = (sulfur carrier)-SH + L-alanine. Catalyzes the removal of elemental sulfur atoms from cysteine to produce alanine. Seems to participate in the biosynthesis of the nitrogenase metalloclusters by providing the inorganic sulfur required for the Fe-S core formation. The protein is Cysteine desulfurase of Sinorhizobium fredii (strain NBRC 101917 / NGR234).